Reading from the N-terminus, the 264-residue chain is Indole-3-glycerol phosphate synthase (264 aa).

It belongs to the TrpC family.

The enzyme catalyses 1-(2-carboxyphenylamino)-1-deoxy-D-ribulose 5-phosphate + H(+) = (1S,2R)-1-C-(indol-3-yl)glycerol 3-phosphate + CO2 + H2O. It functions in the pathway amino-acid biosynthesis; L-tryptophan biosynthesis; L-tryptophan from chorismate: step 4/5. The sequence is that of Indole-3-glycerol phosphate synthase from Rhizorhabdus wittichii (strain DSM 6014 / CCUG 31198 / JCM 15750 / NBRC 105917 / EY 4224 / RW1) (Sphingomonas wittichii).